The primary structure comprises 370 residues: CST complex subunit STN1 (370 aa).

Residues 1–187 (MESNSSQCED…KVYDQPFHSP (187 aa)) form an interaction with CTC1 region. Residues 57–157 (VDILGTVIGV…EIHATTYYKV (101 aa)) constitute a DNA-binding region (OB). Winged helix-turn-helix (wHTH) regions lie at residues 193–297 (EALS…YVTR) and 298–370 (EDKE…YTAF).

This sequence belongs to the STN1 family. In terms of assembly, component of the CST complex, composed of TEN1/C17orf106, CTC1/C17orf68 and STN1; in the complex interacts directly with TEN1 and CTC1. Interacts with ACD/TPP1, POT1 and POLA1.

Its subcellular location is the nucleus. The protein localises to the chromosome. The protein resides in the telomere. In terms of biological role, component of the CST complex proposed to act as a specialized replication factor promoting DNA replication under conditions of replication stress or natural replication barriers such as the telomere duplex. The CST complex binds single-stranded DNA with high affinity in a sequence-independent manner, while isolated subunits bind DNA with low affinity by themselves. Initially the CST complex has been proposed to protect telomeres from DNA degradation. However, the CST complex has been shown to be involved in several aspects of telomere replication. The CST complex inhibits telomerase and is involved in telomere length homeostasis; it is proposed to bind to newly telomerase-synthesized 3' overhangs and to terminate telomerase action implicating the association with the ACD:POT1 complex thus interfering with its telomerase stimulation activity. The CST complex is also proposed to be involved in fill-in synthesis of the telomeric C-strand probably implicating recruitment and activation of DNA polymerase alpha. The CST complex facilitates recovery from many forms of exogenous DNA damage; seems to be involved in the re-initiation of DNA replication at repaired forks and/or dormant origins. Required for efficicient replication of the duplex region of the telomere. Promotes efficient replication of lagging-strand telomeres. Promotes general replication start following replication-fork stalling implicating new origin firing. May be in involved in C-strand fill-in during late S/G2 phase independent of its role in telomere duplex replication. The polypeptide is CST complex subunit STN1 (Bos taurus (Bovine)).